The following is a 404-amino-acid chain: MRLFPKSDKLEHVCYDIRGPVHKEALRLEEEGNKILKLNIGNPAPFGFEAPDEILVDVLRNLPSAQGYCDSKGLYSARKAIVQYYQSKGILGATVNDVYIGNGVSELITMAMQALLNDGDEVLVPMPDYPLWTAAVTLSGGKAVHYLCDEDANWFPTIDDIKAKVNAKTKAIVIINPNNPTGAVYSKELLQEIVEIARQNNLIIFADEIYDKILYDGAVHHHIAALAPDLLTVTLNGLSKAYRVAGFRQGWMILNGPKHNAKGYIEGLDMLASMRLCANVPMQHAIQTALGGYQSINEFILPGGRLLEQRNKAYDLITQIPGITCVKPMGAMYMFPKIDVKKFNIHSDEKMVLDLLRQEKVLLVHGKGFNWHSPDHFRIVTLPYVNQLEEAITKLARFLSDYRQ.

Residues glycine 41 and asparagine 179 each coordinate L-alanine. N6-(pyridoxal phosphate)lysine is present on lysine 240. Arginine 378 is a binding site for L-alanine.

It belongs to the class-I pyridoxal-phosphate-dependent aminotransferase family. As to quaternary structure, homodimer. Pyridoxal 5'-phosphate serves as cofactor.

The catalysed reaction is L-alanine + 2-oxoglutarate = pyruvate + L-glutamate. It functions in the pathway amino-acid biosynthesis; L-alanine biosynthesis. Functionally, involved in the biosynthesis of alanine. Catalyzes the transamination of pyruvate by glutamate, leading to the formation of L-alanine and 2-oxoglutarate. Is also able to catalyze the reverse reaction. In Haemophilus influenzae (strain ATCC 51907 / DSM 11121 / KW20 / Rd), this protein is Glutamate-pyruvate aminotransferase AlaA (alaA).